Reading from the N-terminus, the 473-residue chain is Zinc transporter SLC39A7 (473 aa).

Residues 11–31 traverse the membrane as a helical segment; it reads VAVGLLTWAALGLLVAGHGGH. Basic and acidic residues-rich tracts occupy residues 44–56 and 66–114; these read GHSH…DFHH and HTHE…EHSH. A disordered region spans residues 44-120; that stretch reads GHSHRHSHED…EHSHGGYGES (77 aa). Position 66 is a pros-methylhistidine (histidine 66). 3 helical membrane-spanning segments follow: residues 138-158, 169-189, and 214-234; these read ALGA…LIPV, LQIL…LHLI, and GPIL…LVVE. The disordered stretch occupies residues 243-316; the sequence is GHEHSHGHGH…QHSGEEKAGS (74 aa). Phosphoserine occurs at positions 278 and 279. The segment covering 298 to 316 has biased composition (basic and acidic residues); sequence RPKDGPVRPQHSGEEKAGS. The chain crosses the membrane as a helical span at residues 388 to 408; the sequence is LLTAVGALAGTAFALLTEGGA. The segment at 428-473 is disordered; sequence GDQAATQASPRSTSLPPVGEEDFREDPGPRQKGQQEKSGINVNCVS. Residues 431–442 show a composition bias toward polar residues; that stretch reads AATQASPRSTSL. Positions 452–462 are enriched in basic and acidic residues; the sequence is EDPGPRQKGQQ. A compositionally biased stretch (polar residues) spans 463-473; the sequence is EKSGINVNCVS.

The protein belongs to the ZIP transporter (TC 2.A.5) family. KE4/Catsup subfamily. As to quaternary structure, homodimer. Methylation at some His residue by METTL9 leads to reduced zinc-binding. In terms of processing, rapidly phosphorylated by CK2 following Zn(2+) treatment. This phosphorylation is required for efficient cytosolic Zn(2+) release.

Its subcellular location is the endoplasmic reticulum membrane. The protein localises to the golgi apparatus. It is found in the cis-Golgi network membrane. It catalyses the reaction Zn(2+)(in) = Zn(2+)(out). Its function is as follows. Transports Zn(2+) from the endoplasmic reticulum (ER)/Golgi apparatus to the cytosol, playing an essential role in the regulation of cytosolic zinc levels. Acts as a gatekeeper of zinc release from intracellular stores, requiring post-translational activation by phosphorylation on residues, resulting in activation of multiple downstream pathways leading to cell growth and proliferation. Has an essential role in B cell development and is required for proper B cell receptor signaling. Plays an important role in maintaining intestinal epithelial homeostasis and skin dermis development by regulating ER function. Controls cell signaling pathways involved in glucose metabolism in skeletal muscle. Has a protective role against ER stress in different biological contexts. Mediates Zn(2+)-induced ferroptosis. In Sus scrofa (Pig), this protein is Zinc transporter SLC39A7 (SLC39A7).